The following is a 224-amino-acid chain: Ribose-5-phosphate isomerase A (224 aa).

Residues 33–36, 86–89, and 99–102 each bind substrate; these read TGST, DGAD, and KGGG. Glutamate 108 acts as the Proton acceptor in catalysis. A substrate-binding site is contributed by lysine 126.

It belongs to the ribose 5-phosphate isomerase family. In terms of assembly, homodimer.

The enzyme catalyses aldehydo-D-ribose 5-phosphate = D-ribulose 5-phosphate. The protein operates within carbohydrate degradation; pentose phosphate pathway; D-ribose 5-phosphate from D-ribulose 5-phosphate (non-oxidative stage): step 1/1. Its function is as follows. Catalyzes the reversible conversion of ribose-5-phosphate to ribulose 5-phosphate. In Bordetella avium (strain 197N), this protein is Ribose-5-phosphate isomerase A.